Reading from the N-terminus, the 328-residue chain is 4-hydroxythreonine-4-phosphate dehydrogenase (328 aa).

Positions 135 and 136 each coordinate substrate. Positions 165, 210, and 265 each coordinate a divalent metal cation. Substrate contacts are provided by Lys273, Asn282, and Arg291.

It belongs to the PdxA family. In terms of assembly, homodimer. The cofactor is Zn(2+). Mg(2+) serves as cofactor. It depends on Co(2+) as a cofactor.

It localises to the cytoplasm. It catalyses the reaction 4-(phosphooxy)-L-threonine + NAD(+) = 3-amino-2-oxopropyl phosphate + CO2 + NADH. The protein operates within cofactor biosynthesis; pyridoxine 5'-phosphate biosynthesis; pyridoxine 5'-phosphate from D-erythrose 4-phosphate: step 4/5. Functionally, catalyzes the NAD(P)-dependent oxidation of 4-(phosphooxy)-L-threonine (HTP) into 2-amino-3-oxo-4-(phosphooxy)butyric acid which spontaneously decarboxylates to form 3-amino-2-oxopropyl phosphate (AHAP). The protein is 4-hydroxythreonine-4-phosphate dehydrogenase of Enterobacter sp. (strain 638).